The sequence spans 147 residues: Phospholipase A2 inhibitor subunit A (147 aa).

Residues 62–143 (EICEEAGGHI…DENLLVVCEF (82 aa)) form the C-type lectin domain. 2 disulfide bridges follow: Cys-64-Cys-141 and Cys-119-Cys-133. Residue Asn-103 is glycosylated (N-linked (GlcNAc...) asparagine).

Belongs to the alpha-type phospholipase A2 inhibitor family. In terms of assembly, homo- or heterotrimer; homotrimer of PLI-A chains, two PLI-A and one PLI-B chains, one PLI-A and two PLI-B chains, and homotrimer of PLI-B chains (with a ratio of 1:3:3:1). Expressed by the liver.

The protein localises to the secreted. PLI binds directly phospholipase A2 in the presence or absence of calcium. Inhibitory activity of the PLI-A homotrimer is more specific than that of the PLI-B homotrimer. The polypeptide is Phospholipase A2 inhibitor subunit A (Protobothrops flavoviridis (Habu)).